A 163-amino-acid polypeptide reads, in one-letter code: Ubiquitin-like protein 1-ribosomal protein eS31 fusion protein (163 aa).

The 70-residue stretch at 1-70 folds into the Ubiquitin-like domain; sequence MVFVKTLHRT…IYVNLELLGG (70 aa). Residue Gly70 forms a Glycyl lysine isopeptide (Gly-Lys) (interchain with K-? in acceptor proteins) linkage. A C4-type zinc finger spans residues 115–138; sequence CQQPSCGGGVFMAQHANRHYCGRC.

It in the N-terminal section; belongs to the ubiquitin family. The protein in the C-terminal section; belongs to the eukaryotic ribosomal protein eS31 family.

The chain is Ubiquitin-like protein 1-ribosomal protein eS31 fusion protein from Caenorhabditis elegans.